A 568-amino-acid chain; its full sequence is Circadian clock protein KaiC2 (568 aa).

2 consecutive KaiC domains span residues 11 to 250 and 251 to 485; these read IKCP…SVSQ and ERIS…LTGT. Ser423 and Ser424 each carry phosphoserine; by autocatalysis.

Belongs to the KaiC family. Multimerizes, probably forming homohexamers, no interaction with KaiC1 or KaiC3 is seen.

It catalyses the reaction L-seryl-[protein] + ATP = O-phospho-L-seryl-[protein] + ADP + H(+). The enzyme catalyses L-threonyl-[protein] + ATP = O-phospho-L-threonyl-[protein] + ADP + H(+). The catalysed reaction is ATP + H2O = ADP + phosphate + H(+). Its function is as follows. Autophosphorylates independently of KaiA. This chain is Circadian clock protein KaiC2, found in Synechocystis sp. (strain ATCC 27184 / PCC 6803 / Kazusa).